The primary structure comprises 403 residues: Dynactin subunit 2 (403 aa).

The interval 1 to 26 (MADPKYADLPGIARNEPDVYETSDLP) is disordered. Position 2 is an N-acetylalanine (A2). A Phosphotyrosine modification is found at Y6. A Phosphoserine modification is found at S83. Y86 carries the phosphotyrosine modification. The stretch at 100–130 (QQKYQRLLHEVQELTTEVEKIKTTVKESATE) forms a coiled coil. T134 and T200 each carry phosphothreonine. A disordered region spans residues 184–204 (TKNSKGTGSGGKTTSGTPPDS). Residues 216–248 (EQDKFSQAAKVAELEKRLTELEATVRCDQDAQN) are a coiled coil. S322 is modified (phosphoserine).

The protein belongs to the dynactin subunit 2 family. In terms of assembly, subunit of dynactin, a multiprotein complex part of a tripartite complex with dynein and a adapter, such as BICDL1, BICD2 or HOOK3. The dynactin complex is built around ACTR1A/ACTB filament and consists of an actin-related filament composed of a shoulder domain, a pointed end and a barbed end. Its length is defined by its flexible shoulder domain. The soulder is composed of 2 DCTN1 subunits, 4 DCTN2 and 2 DCTN3. The 4 DCNT2 (via N-terminus) bind the ACTR1A filament and act as molecular rulers to determine the length. The pointed end is important for binding dynein-dynactin cargo adapters and consists of 4 subunits: ACTR10, DCNT4, DCTN5 and DCTN6. The barbed end is composed of a CAPZA1:CAPZB heterodimers, which binds ACTR1A/ACTB filament and dynactin and stabilizes dynactin. Interacts with BICD2 and CEP135. Interacts with DYNAP. Interacts with ECPAS. Interacts with MAPRE1.

It is found in the cytoplasm. Its subcellular location is the cytoskeleton. The protein localises to the microtubule organizing center. It localises to the centrosome. The protein resides in the membrane. In terms of biological role, part of the dynactin complex that activates the molecular motor dynein for ultra-processive transport along microtubules. In the dynactin soulder domain, binds the ACTR1A filament and acts as a molecular ruler to determine the length. Modulates cytoplasmic dynein binding to an organelle, and plays a role in prometaphase chromosome alignment and spindle organization during mitosis. Involved in anchoring microtubules to centrosomes. May play a role in synapse formation during brain development. The sequence is that of Dynactin subunit 2 (DCTN2) from Bos taurus (Bovine).